The following is a 320-amino-acid chain: Foldase protein PrsA (320 aa).

A signal peptide spans 1–20 (MKMINKLIVPVTASALLLGA). Cysteine 21 is lipidated: N-palmitoyl cysteine. A lipid anchor (S-diacylglycerol cysteine) is attached at cysteine 21. A PpiC domain is found at 139–245 (EDSKKASHIL…FGYHIIKADK (107 aa)). The interval 159–198 (EGLDDKEAKQKAEEIQKEVSKDPSKFGEIAKKESMDTGSA) is disordered.

This sequence belongs to the PrsA family.

It is found in the cell membrane. The enzyme catalyses [protein]-peptidylproline (omega=180) = [protein]-peptidylproline (omega=0). Its function is as follows. Plays a major role in protein secretion by helping the post-translocational extracellular folding of several secreted proteins. The polypeptide is Foldase protein PrsA (Staphylococcus aureus (strain Mu3 / ATCC 700698)).